The sequence spans 342 residues: tRNA N6-adenosine threonylcarbamoyltransferase (342 aa).

Residues H115 and H119 each coordinate Fe cation. Substrate-binding positions include 137 to 141 (IVSGG), D170, G183, D187, and N276. Residue D304 participates in Fe cation binding.

This sequence belongs to the KAE1 / TsaD family. Requires Fe(2+) as cofactor.

It is found in the cytoplasm. It catalyses the reaction L-threonylcarbamoyladenylate + adenosine(37) in tRNA = N(6)-L-threonylcarbamoyladenosine(37) in tRNA + AMP + H(+). Its function is as follows. Required for the formation of a threonylcarbamoyl group on adenosine at position 37 (t(6)A37) in tRNAs that read codons beginning with adenine. Is involved in the transfer of the threonylcarbamoyl moiety of threonylcarbamoyl-AMP (TC-AMP) to the N6 group of A37, together with TsaE and TsaB. TsaD likely plays a direct catalytic role in this reaction. The polypeptide is tRNA N6-adenosine threonylcarbamoyltransferase (Staphylococcus haemolyticus (strain JCSC1435)).